Here is a 450-residue protein sequence, read N- to C-terminus: Glutamate--tRNA ligase 2 (450 aa).

Residues proline 10 to asparagine 20 carry the 'HIGH' region motif. The 'KMSKS' region signature appears at glycine 243–arginine 247. Lysine 246 lines the ATP pocket.

This sequence belongs to the class-I aminoacyl-tRNA synthetase family. Glutamate--tRNA ligase type 1 subfamily. As to quaternary structure, monomer.

It localises to the cytoplasm. The catalysed reaction is tRNA(Glu) + L-glutamate + ATP = L-glutamyl-tRNA(Glu) + AMP + diphosphate. Its function is as follows. Catalyzes the attachment of glutamate to tRNA(Glu) in a two-step reaction: glutamate is first activated by ATP to form Glu-AMP and then transferred to the acceptor end of tRNA(Glu). The protein is Glutamate--tRNA ligase 2 of Beijerinckia indica subsp. indica (strain ATCC 9039 / DSM 1715 / NCIMB 8712).